A 316-amino-acid polypeptide reads, in one-letter code: Cytochrome c biogenesis protein CcsA (316 aa).

The next 8 membrane-spanning stretches (helical) occupy residues 9-29 (IFVN…LINL), 39-61 (FSKN…RYLQ), 70-90 (LYES…ILEV), 94-114 (IGLS…FATL), 143-163 (LISY…LSLF), 224-244 (TISL…VWAN), 257-271 (ETWA…AIYL), and 289-309 (SMGF…GVGL).

The protein belongs to the CcmF/CycK/Ccl1/NrfE/CcsA family. May interact with Ccs1.

The protein localises to the plastid. The protein resides in the chloroplast thylakoid membrane. Functionally, required during biogenesis of c-type cytochromes (cytochrome c6 and cytochrome f) at the step of heme attachment. The sequence is that of Cytochrome c biogenesis protein CcsA from Adiantum capillus-veneris (Maidenhair fern).